We begin with the raw amino-acid sequence, 134 residues long: Putative pre-16S rRNA nuclease (134 aa).

Belongs to the YqgF nuclease family.

It is found in the cytoplasm. In terms of biological role, could be a nuclease involved in processing of the 5'-end of pre-16S rRNA. In Helicobacter pylori (strain G27), this protein is Putative pre-16S rRNA nuclease.